Consider the following 298-residue polypeptide: HTH-type transcriptional regulator ArgP (298 aa).

Positions 4–60 constitute an HTH lysR-type domain; sequence LDYKWIEALDAVVYQGSFERAAEHLFVSQSAISQRIKQLEKFLAQPVLIREQPPKPT. Positions 21-40 form a DNA-binding region, H-T-H motif; the sequence is FERAAEHLFVSQSAISQRIK.

This sequence belongs to the LysR transcriptional regulatory family. In terms of assembly, homodimer.

Functionally, controls the transcription of genes involved in arginine and lysine metabolism. The sequence is that of HTH-type transcriptional regulator ArgP from Vibrio parahaemolyticus serotype O3:K6 (strain RIMD 2210633).